Consider the following 517-residue polypeptide: Crotonobetaine/carnitine--CoA ligase (517 aa).

This sequence belongs to the ATP-dependent AMP-binding enzyme family.

It catalyses the reaction 4-(trimethylamino)butanoate + ATP + CoA = 4-(trimethylamino)butanoyl-CoA + AMP + diphosphate. It carries out the reaction crotonobetaine + ATP + CoA = crotonobetainyl-CoA + AMP + diphosphate. The catalysed reaction is (R)-carnitine + ATP + CoA = (R)-carnitinyl-CoA + AMP + diphosphate. It participates in amine and polyamine metabolism; carnitine metabolism. Catalyzes the transfer of CoA to carnitine, generating the initial carnitinyl-CoA needed for the CaiB reaction cycle. Also has activity toward crotonobetaine and gamma-butyrobetaine. This is Crotonobetaine/carnitine--CoA ligase from Escherichia coli O1:K1 / APEC.